A 412-amino-acid polypeptide reads, in one-letter code: Solute carrier family 22 member 18 (412 aa).

10 helical membrane-spanning segments follow: residues 16–36 (GIII…FMQF), 51–71 (VSFG…GPVF), 117–137 (LPAA…DLTA), 148–168 (LGLC…TLST), 176–196 (AFLA…CIPV), 232–252 (FLVK…FSII), 264–284 (AGYL…LVIG), 294–314 (ALLR…ALMS), 316–336 (VFHF…LNIV), and 380–400 (GVSI…LVLW).

The protein belongs to the major facilitator (TC 2.A.1) superfamily. Organic cation transporter (TC 2.A.1.19) family.

The protein resides in the apical cell membrane. Its function is as follows. May act as a transporter of organic cations based on a proton efflux antiport mechanism. May play a role in the transport of chloroquine and quinidine-related compounds in kidney. Plays a role in the regulation of lipid metabolism. This Rattus norvegicus (Rat) protein is Solute carrier family 22 member 18 (Slc67a1).